The following is a 116-amino-acid chain: Ly-6/neurotoxin-like protein 1 (116 aa).

The signal sequence occupies residues 1 to 20 (MTPLLTLFLVALIGLPLAQA). The UPAR/Ly6 domain maps to 21–105 (LDCHVCAYNG…FAAPATLALA (85 aa)). 5 disulfide bridges follow: Cys23-Cys46, Cys26-Cys33, Cys39-Cys64, Cys68-Cys85, and Cys86-Cys91. Asn92 carries GPI-anchor amidated asparagine lipidation. The propeptide at 93-116 (GAGFAAPATLALAPILLATLWGLL) is removed in mature form.

Interacts with nAChRs containing alpha-4:beta-2 (CHRNA4:CHRNB2) and alpha-7 (CHRNA7) subunits. Interacts with CHRNA4 probably in the endoplasmic reticulum prior to nAChR pentameric assembly. Interacts with KCNA2/Potassium voltage-gated channel subfamily A member 2.

The protein localises to the cell membrane. It is found in the cell projection. The protein resides in the dendrite. It localises to the endoplasmic reticulum. Acts in different tissues through interaction to nicotinic acetylcholine receptors (nAChRs). The proposed role as modulator of nAChR activity seems to be dependent on the nAChR subtype and stoichiometry, and to involve an effect on nAChR trafficking and its cell surface expression, and on single channel properties of the nAChR inserted in the plasma membrane. Modulates functional properties of nicotinic acetylcholine receptors (nAChRs) to prevent excessive excitation, and hence neurodegeneration. Enhances desensitization by increasing both the rate and extent of desensitization of alpha-4:beta-2-containing nAChRs and slowing recovery from desensitization. Promotes large amplitude ACh-evoked currents through alpha-4:beta-2 nAChRs. Is involved in regulation of the nAChR pentameric assembly in the endoplasmic reticulum. Shifts stoichiometry from high sensitivity alpha-4(2):beta-2(3) to low sensitivity alpha-4(3):beta-2(2) nAChR. In vitro modulates alpha-3:beta-4-containing nAChRs. Reduces cell surface expression of (alpha-3:beta-4)(2):beta-4 and (alpha-3:beta-4)(2):alpha-5 nAChRs suggesting an interaction with nAChR alpha-3(-):(+)beta-4 subunit interfaces and an allosteric mode. Corresponding single channel effects characterized by decreased unitary conductance, altered burst proportions and enhanced desensitization/inactivation seem to depend on nAChR alpha:alpha subunit interfaces and are greater in (alpha-3:beta-2)(2):alpha-3 when compared to (alpha-3:beta-2)(2):alpha-5 nAChRs. Prevents plasticity in the primary visual cortex late in life. This is Ly-6/neurotoxin-like protein 1 from Saimiri boliviensis boliviensis (Bolivian squirrel monkey).